The chain runs to 254 residues: Axonemal dynein light intermediate polypeptide 1 (254 aa).

Residues Met-1–Leu-55 are disordered. Residues Ala-175 to Gln-245 adopt a coiled-coil conformation.

This sequence belongs to the inner dynein arm light chain family.

It localises to the cell projection. The protein localises to the cilium. Its subcellular location is the flagellum. The protein resides in the dynein axonemal particle. It is found in the cytoplasm. Involved in sperm flagellum assembly. The sequence is that of Axonemal dynein light intermediate polypeptide 1 from Xenopus laevis (African clawed frog).